Reading from the N-terminus, the 424-residue chain is Homeobox even-skipped homolog protein 2 (424 aa).

2 disordered regions span residues 18–65 (PAGK…DTPT) and 132–178 (TTQL…GPDQ). Polar residues-rich tracts occupy residues 50–65 (RPTS…DTPT) and 132–145 (TTQL…VYSD). The span at 146 to 175 (NGSSTNTSSNGSNITNLNGNSSSIGNSGSG) shows a compositional bias: low complexity. The homeobox DNA-binding region spans 179–238 (VRRYRTAFTREQIGRLEKEFYRENYVSRPRRCELAAALNLPETTIKVWFQNRRMKDKRQR).

It belongs to the even-skipped homeobox family.

Its subcellular location is the nucleus. The polypeptide is Homeobox even-skipped homolog protein 2 (EVX2) (Heterodontus francisci (Horn shark)).